The primary structure comprises 122 residues: Large ribosomal subunit protein uL14 (122 aa).

The protein belongs to the universal ribosomal protein uL14 family. As to quaternary structure, part of the 50S ribosomal subunit. Forms a cluster with proteins L3 and L19. In the 70S ribosome, L14 and L19 interact and together make contacts with the 16S rRNA in bridges B5 and B8.

Functionally, binds to 23S rRNA. Forms part of two intersubunit bridges in the 70S ribosome. This is Large ribosomal subunit protein uL14 from Thermus aquaticus.